The sequence spans 502 residues: Probable zinc metalloprotease MGG_02107 (502 aa).

The N-terminal stretch at 1–21 (MRSPPGAVAALASVAAQLATA) is a signal peptide. Zn(2+)-binding residues include H182, D202, and E235. N-linked (GlcNAc...) asparagine glycosylation occurs at N250. Residue D262 coordinates Zn(2+). Residues 284 to 307 (QGGSPAGESKERAETRASIGGEND) are disordered. N375, N417, and N427 each carry an N-linked (GlcNAc...) asparagine glycan. The Fibronectin type-III domain maps to 414-502 (QVRNVTVDTS…KSPATMPFPG (89 aa)).

The protein belongs to the peptidase M28 family. M28B subfamily. Zn(2+) serves as cofactor.

It localises to the secreted. The polypeptide is Probable zinc metalloprotease MGG_02107 (Pyricularia oryzae (strain 70-15 / ATCC MYA-4617 / FGSC 8958) (Rice blast fungus)).